A 429-amino-acid polypeptide reads, in one-letter code: UDP-glucuronate 4-epimerase 1 (429 aa).

The next 2 membrane-spanning stretches (helical) occupy residues 36–56 and 87–107; these read FLWA…QSFV and GISV…SLAL. 89 to 120 serves as a coordination point for NAD(+); it reads SVLVTGATGFVGSHVSLALRKRGDGVVGLDNF. The active-site Proton acceptor is the tyrosine 239.

The protein belongs to the NAD(P)-dependent epimerase/dehydratase family. In terms of assembly, homodimer. In terms of tissue distribution, in root stele, leaves, siliques, flowers, pollen and stems.

The protein resides in the golgi apparatus. The protein localises to the golgi stack membrane. The enzyme catalyses UDP-alpha-D-glucuronate = UDP-alpha-D-galacturonate. With respect to regulation, inhibited by UDP-Xylose. UDP-D-glucuronate 4-epimerase involved in the synthesis of the negatively charged monosaccharide that forms the backbone of pectic cell wall components. The protein is UDP-glucuronate 4-epimerase 1 (GAE1) of Arabidopsis thaliana (Mouse-ear cress).